The sequence spans 357 residues: MVNAPIKLLIAASGTGGHLFPAIALAEKLPDYEIEWLGVPNRLETQLVPKQYPLNTIAVEGFQQGLGLSSLVILGKLIGSILKVRRLLKQGNFQGVVTTGGYIAGPAVIAARSLGLPVIFHESNALPGKVTRFFGPWCSVVALGFDVAAKYLPRATNVCVGTPVRSQFLNLSNNSQLDLAIPGGVPVIVVFGGSQGAVAVNQLVRQAAPAWFEAGAYVVHLTGDRDPDVDSLKHPQYIELPFYDNMAALLQRASLAISRSGAGSLTELAVCGTPAILIPYPFAAEDHQSYNAEVFTKAGAALSFKQSALTAELLQNQVLNLLQSPPELAKMGENAKAIAVPDSADKLAVLVREVVER.

UDP-N-acetyl-alpha-D-glucosamine-binding positions include 15–17 (TGG), N124, R165, S194, and Q288.

This sequence belongs to the glycosyltransferase 28 family. MurG subfamily.

The protein localises to the cell inner membrane. It carries out the reaction di-trans,octa-cis-undecaprenyl diphospho-N-acetyl-alpha-D-muramoyl-L-alanyl-D-glutamyl-meso-2,6-diaminopimeloyl-D-alanyl-D-alanine + UDP-N-acetyl-alpha-D-glucosamine = di-trans,octa-cis-undecaprenyl diphospho-[N-acetyl-alpha-D-glucosaminyl-(1-&gt;4)]-N-acetyl-alpha-D-muramoyl-L-alanyl-D-glutamyl-meso-2,6-diaminopimeloyl-D-alanyl-D-alanine + UDP + H(+). It participates in cell wall biogenesis; peptidoglycan biosynthesis. In terms of biological role, cell wall formation. Catalyzes the transfer of a GlcNAc subunit on undecaprenyl-pyrophosphoryl-MurNAc-pentapeptide (lipid intermediate I) to form undecaprenyl-pyrophosphoryl-MurNAc-(pentapeptide)GlcNAc (lipid intermediate II). This Trichormus variabilis (strain ATCC 29413 / PCC 7937) (Anabaena variabilis) protein is UDP-N-acetylglucosamine--N-acetylmuramyl-(pentapeptide) pyrophosphoryl-undecaprenol N-acetylglucosamine transferase.